The following is a 244-amino-acid chain: 5-oxoprolinase subunit A (244 aa).

Belongs to the LamB/PxpA family. As to quaternary structure, forms a complex composed of PxpA, PxpB and PxpC.

The catalysed reaction is 5-oxo-L-proline + ATP + 2 H2O = L-glutamate + ADP + phosphate + H(+). In terms of biological role, catalyzes the cleavage of 5-oxoproline to form L-glutamate coupled to the hydrolysis of ATP to ADP and inorganic phosphate. The sequence is that of 5-oxoprolinase subunit A from Escherichia coli O139:H28 (strain E24377A / ETEC).